Here is a 360-residue protein sequence, read N- to C-terminus: Phospho-N-acetylmuramoyl-pentapeptide-transferase (360 aa).

Helical transmembrane passes span 21 to 41 (YLSFRAIASILTALCLSLWMG), 73 to 93 (TMGGVMILAAIIITVLMWADL), 94 to 114 (SNPYVWAVLVVLAGYGAVGFV), 132 to 152 (WKYFWQSAIALVVAFALYAHG), 168 to 188 (VMPQLGLLYIVLTYFVIVGTS), 199 to 219 (GLAIMPTVMVAAGFAVIAWAT), 239 to 259 (LVVVCTAIVGAGLGFLWFNTY), 263 to 283 (VFMGDVGSLALGGALGVIAVL), 288 to 308 (LVLVIMGGVFVMETLSVILQV), and 338 to 358 (VIVRFWIISMVLVLVGLATLK).

It belongs to the glycosyltransferase 4 family. MraY subfamily. It depends on Mg(2+) as a cofactor.

It localises to the cell inner membrane. The enzyme catalyses UDP-N-acetyl-alpha-D-muramoyl-L-alanyl-gamma-D-glutamyl-meso-2,6-diaminopimeloyl-D-alanyl-D-alanine + di-trans,octa-cis-undecaprenyl phosphate = di-trans,octa-cis-undecaprenyl diphospho-N-acetyl-alpha-D-muramoyl-L-alanyl-D-glutamyl-meso-2,6-diaminopimeloyl-D-alanyl-D-alanine + UMP. It participates in cell wall biogenesis; peptidoglycan biosynthesis. In terms of biological role, catalyzes the initial step of the lipid cycle reactions in the biosynthesis of the cell wall peptidoglycan: transfers peptidoglycan precursor phospho-MurNAc-pentapeptide from UDP-MurNAc-pentapeptide onto the lipid carrier undecaprenyl phosphate, yielding undecaprenyl-pyrophosphoryl-MurNAc-pentapeptide, known as lipid I. The sequence is that of Phospho-N-acetylmuramoyl-pentapeptide-transferase from Vibrio atlanticus (strain LGP32) (Vibrio splendidus (strain Mel32)).